Here is a 78-residue protein sequence, read N- to C-terminus: Acyl carrier protein (78 aa).

Residues 2–77 (SDVLERVSKI…DAVKFISEKV (76 aa)) form the Carrier domain. Position 37 is an O-(pantetheine 4'-phosphoryl)serine (S37).

It belongs to the acyl carrier protein (ACP) family. 4'-phosphopantetheine is transferred from CoA to a specific serine of apo-ACP by AcpS. This modification is essential for activity because fatty acids are bound in thioester linkage to the sulfhydryl of the prosthetic group.

It is found in the cytoplasm. It functions in the pathway lipid metabolism; fatty acid biosynthesis. Its function is as follows. Carrier of the growing fatty acid chain in fatty acid biosynthesis. The chain is Acyl carrier protein from Maricaulis maris (strain MCS10) (Caulobacter maris).